A 217-amino-acid chain; its full sequence is MQDTTLHIRHLGQQDYESVWHAMQHYTDTRNSDSPDELWIVEHPPVFTQGQAGKSEHILNPGDIPVIQVDRGGQVTYHGPGQLVVYPLLDIKRSKIGVRQLVTHIEQSIIDMLAKYDINAYAKADAPGVYVDERKVASLGLRIRKGCSFHGLALNVDMDLAPFRRINPCGYAGLEMVQCKELGGPQTVIEAGDQLIITLSQLLGYQQLVHHQGLAAS.

The BPL/LPL catalytic domain occupies 32–207 (SDSPDELWIV…TLSQLLGYQQ (176 aa)). Substrate contacts are provided by residues 71 to 78 (RGGQVTYH), 138 to 140 (SLG), and 151 to 153 (GLA). The active-site Acyl-thioester intermediate is Cys-169.

This sequence belongs to the LipB family.

The protein localises to the cytoplasm. It carries out the reaction octanoyl-[ACP] + L-lysyl-[protein] = N(6)-octanoyl-L-lysyl-[protein] + holo-[ACP] + H(+). The protein operates within protein modification; protein lipoylation via endogenous pathway; protein N(6)-(lipoyl)lysine from octanoyl-[acyl-carrier-protein]: step 1/2. Its function is as follows. Catalyzes the transfer of endogenously produced octanoic acid from octanoyl-acyl-carrier-protein onto the lipoyl domains of lipoate-dependent enzymes. Lipoyl-ACP can also act as a substrate although octanoyl-ACP is likely to be the physiological substrate. The sequence is that of Octanoyltransferase from Shewanella sp. (strain MR-7).